Here is a 355-residue protein sequence, read N- to C-terminus: Poly(3-hydroxyalkanoate) polymerase subunit PhaC (355 aa).

The 266-residue stretch at 69–334 folds into the AB hydrolase-1 domain; that stretch reads PLLIVYALVN…LAFPGGHIGI (266 aa). Residue Cys-149 is part of the active site.

Belongs to the PHA/PHB synthase family. Type III PhaC subfamily. As to quaternary structure, a large complex of PhaC and PhaE; the ratio of the subunits has been estimated to be from 1:1 to 4:1, with more PhaE than PhaC.

The protein localises to the cytoplasm. It carries out the reaction (3R)-3-hydroxybutanoyl-CoA + [(3R)-hydroxybutanoate](n) = [(3R)-hydroxybutanoate](n+1) + CoA. It functions in the pathway biopolymer metabolism; poly-(R)-3-hydroxybutanoate biosynthesis. Functionally, polymerizes D(-)-3-hydroxybutyryl-CoA to create polyhydroxybutyrate (PHB) which consists of thousands of hydroxybutyrate molecules linked end to end. This subunit has catalytic activity that is enhanced 100-fold by PhaE, the non-catalytic subunit. This is Poly(3-hydroxyalkanoate) polymerase subunit PhaC from Allochromatium vinosum (strain ATCC 17899 / DSM 180 / NBRC 103801 / NCIMB 10441 / D) (Chromatium vinosum).